The chain runs to 380 residues: Cytochrome b (380 aa).

The next 4 helical transmembrane spans lie at 33 to 53 (FGSL…FLAM), 77 to 98 (WLIR…FIHV), 113 to 133 (WNIG…GYVL), and 178 to 198 (FFAF…VHLL). The heme b site is built by His83 and His97. Heme b-binding residues include His182 and His196. His201 is an a ubiquinone binding site. Helical transmembrane passes span 226 to 246 (IKDL…VLFF), 288 to 308 (LGGV…PLLN), 320 to 340 (ITQV…XXXX), and 347 to 367 (XXXX…IFMP).

It belongs to the cytochrome b family. As to quaternary structure, the cytochrome bc1 complex contains 11 subunits: 3 respiratory subunits (MT-CYB, CYC1 and UQCRFS1), 2 core proteins (UQCRC1 and UQCRC2) and 6 low-molecular weight proteins (UQCRH/QCR6, UQCRB/QCR7, UQCRQ/QCR8, UQCR10/QCR9, UQCR11/QCR10 and a cleavage product of UQCRFS1). This cytochrome bc1 complex then forms a dimer. Heme b serves as cofactor.

It is found in the mitochondrion inner membrane. In terms of biological role, component of the ubiquinol-cytochrome c reductase complex (complex III or cytochrome b-c1 complex) that is part of the mitochondrial respiratory chain. The b-c1 complex mediates electron transfer from ubiquinol to cytochrome c. Contributes to the generation of a proton gradient across the mitochondrial membrane that is then used for ATP synthesis. The protein is Cytochrome b (MT-CYB) of Rhipidomys leucodactylus (White-footed climbing mouse).